The primary structure comprises 1872 residues: Fatty acid synthase beta subunit pkiC (1872 aa).

The tract at residues 174–425 (VFGGQGECSR…DQSRIPFRDR (252 aa)) is acetyltransferase (AT) domain. The tract at residues 591 to 836 (NRVLGAPPIM…IIAATPGVSD (246 aa)) is enoyl reductase (ER) domain. The tract at residues 1111–1132 (TTPASWSTLSLTERDTSEETSD) is disordered. Residues 1158–1597 (PSHPLWMRAL…MPLEKLVVEI (440 aa)) form a dehydratase (DH) domain region. The MaoC-like domain occupies 1518-1617 (PPSNEPYAQL…CFSILAKRKE (100 aa)).

This sequence belongs to the fungal fatty acid synthetase subunit beta family. [Alpha(6)beta(6)] hexamers of two multifunctional subunits (alpha and beta).

The catalysed reaction is acetyl-CoA + n malonyl-CoA + 2n NADPH + 4n H(+) = a long-chain-acyl-CoA + n CoA + n CO2 + 2n NADP(+).. The enzyme catalyses holo-[ACP] + acetyl-CoA = acetyl-[ACP] + CoA. It catalyses the reaction holo-[ACP] + malonyl-CoA = malonyl-[ACP] + CoA. It carries out the reaction a (3R)-hydroxyacyl-[ACP] = a (2E)-enoyl-[ACP] + H2O. The catalysed reaction is a 2,3-saturated acyl-[ACP] + NAD(+) = a (2E)-enoyl-[ACP] + NADH + H(+). The enzyme catalyses (9Z)-octadecenoyl-[ACP] + H2O = (9Z)-octadecenoate + holo-[ACP] + H(+). It functions in the pathway secondary metabolite biosynthesis. Functionally, fatty acid synthase beta subunit; part of the pki gene cluster that mediates the biosynthesis of 2,4-dihydroxy-3-methyl-6-(2-oxoundecyl)benzaldehyde. The first step in the pathway is the generation of the decanoyl starter unit by the FAS composed of subunits pkiB and pkiC, which is then transferred directly from the FAS to the SAT domain of the non-reducing polyketide synthase pkiA. PkiA condenses the decanoyyl starter unit with 4 malonyl-CoA units and performs one methylation step to yield 2,4-dihydroxy-3-methyl-6-(2-oxoundecyl)benzaldehyde. This is Fatty acid synthase beta subunit pkiC from Emericella nidulans (strain FGSC A4 / ATCC 38163 / CBS 112.46 / NRRL 194 / M139) (Aspergillus nidulans).